The sequence spans 483 residues: Regulatory protein ViaA (483 aa).

The protein belongs to the ViaA family. Homodimer. Interacts with RavA.

It localises to the cytoplasm. In terms of biological role, component of the RavA-ViaA chaperone complex, which may act on the membrane to optimize the function of some of the respiratory chains. ViaA stimulates the ATPase activity of RavA. The polypeptide is Regulatory protein ViaA (Escherichia coli O81 (strain ED1a)).